We begin with the raw amino-acid sequence, 241 residues long: Tetraspanin-1 (241 aa).

Residues 1-11 (MQCFSFIKTMM) are Cytoplasmic-facing. The chain crosses the membrane as a helical span at residues 12–34 (ILFNLLIFLCGAALLAVGIWVSI). The Extracellular portion of the chain corresponds to 35 to 53 (DGASFLKIFGPLSSSAMQF). Residues 54 to 76 (VNVGYFLIAAGVVVFALGFLGCY) form a helical membrane-spanning segment. Residues 77–88 (GAKTESKCALMT) are Cytoplasmic-facing. A helical membrane pass occupies residues 89-111 (FFFILLLIFIAEVAAAVVALVYT). The Extracellular segment spans residues 112-214 (TMAEHFLTLL…LYDIRTNAVT (103 aa)). Asn-141, Asn-154, Asn-178, and Asn-184 each carry an N-linked (GlcNAc...) asparagine glycan. Residues 215 to 237 (VGGVAAGIGGLELAAMIVSMYLY) form a helical membrane-spanning segment. The Cytoplasmic segment spans residues 238–241 (CNLQ).

Belongs to the tetraspanin (TM4SF) family. In terms of assembly, interacts with SLC19A2. Interacts with NTRK1/TRKA.

The protein localises to the lysosome membrane. Its function is as follows. Structural component of specialized membrane microdomains known as tetraspanin-enriched microdomains (TERMs), which act as platforms for receptor clustering and signaling. Participates thereby in diverse biological functions such as cell signal transduction, adhesion, migration and protein trafficking. Regulates neuronal differentiation in response to NGF by facilitating NGF-mediated activation of NTRK1/TRKA receptor tyrosine kinase and subsequent downstream signaling pathways. Plays a role in the inhibition of TNFalpha-induced apoptosis. Mechanistically, inhibits the NF-kappa-B signaling pathway by blocking phosphorylation of CHUK. Also promotes the stability of the thiamine transporter 1/SLC19A2 in intestinal epithelial cells leading to an increase of thiamine uptake process. The polypeptide is Tetraspanin-1 (TSPAN1) (Pongo abelii (Sumatran orangutan)).